The chain runs to 130 residues: Protein ApaG (130 aa).

Positions 3–127 constitute an ApaG domain; the sequence is KAETRGIMVT…FSLDSPHLRR (125 aa).

The sequence is that of Protein ApaG from Methylorubrum extorquens (strain CM4 / NCIMB 13688) (Methylobacterium extorquens).